Consider the following 204-residue polypeptide: Octanoyltransferase (204 aa).

The BPL/LPL catalytic domain maps to 27-202 (QGGEEALLLL…RFQPLLNLHL (176 aa)). Substrate-binding positions include 65 to 72 (RGGDVTYH), 132 to 134 (SIG), and 145 to 147 (GFA). Residue cysteine 163 is the Acyl-thioester intermediate of the active site.

It belongs to the LipB family.

It is found in the cytoplasm. The catalysed reaction is octanoyl-[ACP] + L-lysyl-[protein] = N(6)-octanoyl-L-lysyl-[protein] + holo-[ACP] + H(+). It functions in the pathway protein modification; protein lipoylation via endogenous pathway; protein N(6)-(lipoyl)lysine from octanoyl-[acyl-carrier-protein]: step 1/2. Catalyzes the transfer of endogenously produced octanoic acid from octanoyl-acyl-carrier-protein onto the lipoyl domains of lipoate-dependent enzymes. Lipoyl-ACP can also act as a substrate although octanoyl-ACP is likely to be the physiological substrate. This chain is Octanoyltransferase, found in Citrifermentans bemidjiense (strain ATCC BAA-1014 / DSM 16622 / JCM 12645 / Bem) (Geobacter bemidjiensis).